Consider the following 240-residue polypeptide: Adiponectin (240 aa).

An N-terminal signal peptide occupies residues 1 to 17 (MLLQGALLLLLALPSHG). Lysine 28 carries the post-translational modification 5-hydroxylysine. Residue lysine 28 is glycosylated (O-linked (Gal...) hydroxylysine). The segment at 29–100 (GACAGWMAGI…GTPGRKGEPG (72 aa)) is disordered. Position 31 is an S-(2-succinyl)cysteine (cysteine 31). A 4-hydroxyproline mark is found at proline 39, proline 42, and proline 48. Residues 43 to 102 (GHNGTPGRDGRDGTPGEKGEKGDPGLVGPKGDTGETGITGIEGPRGFPGTPGRKGEPGES) form the Collagen-like domain. Basic and acidic residues predominate over residues 50–65 (RDGRDGTPGEKGEKGD). 5-hydroxylysine is present on residues lysine 60, lysine 63, and lysine 72. 3 O-linked (Gal...) hydroxylysine glycosylation sites follow: lysine 60, lysine 63, and lysine 72. Proline 86 carries the 4-hydroxyproline modification. At lysine 96 the chain carries 5-hydroxylysine. O-linked (Gal...) hydroxylysine glycosylation is present at lysine 96. The C1q domain maps to 103–240 (AYVYRSAFSV…GFLLYHNIVE (138 aa)).

Homomultimer. Forms trimers, hexamers and 12- to 18-mers. The trimers (low molecular weight complexes / LMW) are assembled via non-covalent interactions of the collagen-like domains in a triple helix and hydrophobic interactions within the globular C1q domain. Several trimers can associate to form disulfide-linked hexamers (middle molecular weight complexes / MMW) and larger complexes (higher molecular weight / HMW). The HMW-complex assembly is also modulated by the degree of lysine hydroxylation and glycosylation. LMW, MMW and HMW complexes bind to HBEGF, MMW and HMW complexes bind to PDGFB, and HMW complex binds to FGF2. Interacts with CTRP9 via the C1q domain (heterotrimeric complex). Post-translationally, HMW complexes are more extensively glycosylated than smaller oligomers. Hydroxylation and glycosylation of the lysine residues within the collagen-like domain of adiponectin seem to be critically involved in regulating the formation and/or secretion of HMW complexes and consequently contribute to the insulin-sensitizing activity of adiponectin in hepatocytes. In terms of processing, O-glycosylated. O-linked glycans on hydroxylysine residues consist of Glc-Gal disaccharides bound to the oxygen atom of post-translationally added hydroxyl groups. O-linked glycosylations elsewhere disialylated with the structure Neu5Acalpha2-&gt;8Neu5Acalpha2-&gt;3Gal. Sialylated by alpha 2,8-sialyltransferase III. Desialylated forms are rapidly cleared from the circulation. Not N-glycosylated. Succination of Cys-31 by the Krebs cycle intermediate fumarate, which leads to S-(2-succinyl)cysteine residues, inhibits polymerization and secretion of adiponectin. Adiponectin is a major target for succination in both adipocytes and adipose tissue of diabetic mammals. It was proposed that succination of proteins is a biomarker of mitochondrial stress and accumulation of Krebs cycle intermediates in adipose tissue in diabetes and that succination of adiponectin may contribute to the decrease in plasma adiponectin in diabetes.

It is found in the secreted. With respect to regulation, polymerization and secretion of adiponectin is inhibited by succination of cysteine residues by the Krebs cycle intermediate fumarate, which leads to S-(2-succinyl)cysteine residues. Functionally, important adipokine involved in the control of fat metabolism and insulin sensitivity, with direct anti-diabetic, anti-atherogenic and anti-inflammatory activities. Stimulates AMPK phosphorylation and activation in the liver and the skeletal muscle, enhancing glucose utilization and fatty-acid combustion. Antagonizes TNF-alpha by negatively regulating its expression in various tissues such as liver and macrophages, and also by counteracting its effects. Inhibits endothelial NF-kappa-B signaling through a cAMP-dependent pathway. May play a role in cell growth, angiogenesis and tissue remodeling by binding and sequestering various growth factors with distinct binding affinities, depending on the type of complex, LMW, MMW or HMW. This is Adiponectin (ADIPOQ) from Bos taurus (Bovine).